The following is a 234-amino-acid chain: Probable transcriptional regulatory protein Psyr_3028 (234 aa).

Belongs to the TACO1 family.

The protein resides in the cytoplasm. The chain is Probable transcriptional regulatory protein Psyr_3028 from Pseudomonas syringae pv. syringae (strain B728a).